The chain runs to 244 residues: MKVKTSLSTLILILFLTGCKVDLYTGISQKEGNEMLALLRQEGLSADKEPDKDGKIKLLVEESDVAQAIDILKRKGYPHESFSTLQDVFPKDGLISSPIEELARLNYAKAQEISRTLSEIDGVLVARVHVVLPEEQNNKGKKGVAASASVFIKHAADIQFDTYIPQIKQLVNNSIEGLAYDRISVILVPSVDVRQSSHLPRNTSILSIQVSEESKGHLIGLLSLLILLLPVTNLAQYFWLQRKK.

Positions 1 to 18 (MKVKTSLSTLILILFLTG) are cleaved as a signal peptide. A lipid anchor (N-palmitoyl cysteine) is attached at Cys19. Cys19 carries the S-diacylglycerol cysteine lipid modification. A helical membrane pass occupies residues 218-238 (LIGLLSLLILLLPVTNLAQYF).

This sequence belongs to the YscJ lipoprotein family.

The protein resides in the cell outer membrane. Required for the export process of the Yop proteins. In Yersinia pestis, this protein is Yop proteins translocation lipoprotein J (yscJ).